The following is a 447-amino-acid chain: 2-oxoadipate dioxygenase/decarboxylase (447 aa).

Positions 68, 72, and 224 each coordinate 2-oxoadipate. Histidine 68 provides a ligand contact to Fe(2+). Residues histidine 224 and glutamate 290 each contribute to the Fe(2+) site. Residue valine 391 coordinates 2-oxoadipate.

Belongs to the 2-oxoadipate dioxygenase/decarboxylase family. Requires Fe(2+) as cofactor.

The catalysed reaction is 2-oxoadipate + O2 = (R)-2-hydroxyglutarate + CO2. Catalyzes the decarboxylation and hydroxylation of 2-oxoadipate (2OA) to form D-2-hydroxyglutarate (D-2-HGA). This chain is 2-oxoadipate dioxygenase/decarboxylase (ydcJ), found in Escherichia coli (strain K12).